We begin with the raw amino-acid sequence, 463 residues long: Metalloprotease slr0863 (463 aa).

It belongs to the peptidase U62 family.

Its function is as follows. Probable metalloprotease. The sequence is that of Metalloprotease slr0863 from Synechocystis sp. (strain ATCC 27184 / PCC 6803 / Kazusa).